Reading from the N-terminus, the 288-residue chain is ATP synthase gamma chain 1 (288 aa).

It belongs to the ATPase gamma chain family. F-type ATPases have 2 components, CF(1) - the catalytic core - and CF(0) - the membrane proton channel. CF(1) has five subunits: alpha(3), beta(3), gamma(1), delta(1), epsilon(1). CF(0) has three main subunits: a, b and c.

It localises to the cell inner membrane. In terms of biological role, produces ATP from ADP in the presence of a proton gradient across the membrane. The gamma chain is believed to be important in regulating ATPase activity and the flow of protons through the CF(0) complex. The chain is ATP synthase gamma chain 1 from Photobacterium profundum (strain SS9).